We begin with the raw amino-acid sequence, 500 residues long: ATP synthase subunit alpha (500 aa).

An ATP-binding site is contributed by 169–176 (GDRQTGKT).

This sequence belongs to the ATPase alpha/beta chains family. In terms of assembly, F-type ATPases have 2 components, CF(1) - the catalytic core - and CF(0) - the membrane proton channel. CF(1) has five subunits: alpha(3), beta(3), gamma(1), delta(1), epsilon(1). CF(0) has three main subunits: a(1), b(2) and c(9-12). The alpha and beta chains form an alternating ring which encloses part of the gamma chain. CF(1) is attached to CF(0) by a central stalk formed by the gamma and epsilon chains, while a peripheral stalk is formed by the delta and b chains.

It is found in the cell inner membrane. It carries out the reaction ATP + H2O + 4 H(+)(in) = ADP + phosphate + 5 H(+)(out). Its function is as follows. Produces ATP from ADP in the presence of a proton gradient across the membrane. The alpha chain is a regulatory subunit. The protein is ATP synthase subunit alpha of Fusobacterium nucleatum subsp. nucleatum (strain ATCC 25586 / DSM 15643 / BCRC 10681 / CIP 101130 / JCM 8532 / KCTC 2640 / LMG 13131 / VPI 4355).